We begin with the raw amino-acid sequence, 344 residues long: Adenosine kinase 1 (344 aa).

Asp-299 is a catalytic residue.

Belongs to the carbohydrate kinase PfkB family. Interacts with the begomovirus AL2 protein and the curtovirus L2 protein. It depends on Mg(2+) as a cofactor. Widely expressed.

The catalysed reaction is adenosine + ATP = AMP + ADP + H(+). The protein operates within purine metabolism; AMP biosynthesis via salvage pathway; AMP from adenosine: step 1/1. Inactivated by the begomovirus AL2 protein or the curtovirus L2 protein. Its function is as follows. ATP dependent phosphorylation of adenosine and other related nucleoside analogs to monophosphate derivatives. Essential to sustain methyl recycling. In Arabidopsis thaliana (Mouse-ear cress), this protein is Adenosine kinase 1.